The chain runs to 224 residues: tRNA (guanine-N(7)-)-methyltransferase (224 aa).

S-adenosyl-L-methionine contacts are provided by Glu-54, Glu-79, and Asp-129. Residue Asp-129 is part of the active site. The substrate site is built by Lys-133 and Asp-165.

It belongs to the class I-like SAM-binding methyltransferase superfamily. TrmB family.

The catalysed reaction is guanosine(46) in tRNA + S-adenosyl-L-methionine = N(7)-methylguanosine(46) in tRNA + S-adenosyl-L-homocysteine. It participates in tRNA modification; N(7)-methylguanine-tRNA biosynthesis. Its function is as follows. Catalyzes the formation of N(7)-methylguanine at position 46 (m7G46) in tRNA. In Chlamydia pneumoniae (Chlamydophila pneumoniae), this protein is tRNA (guanine-N(7)-)-methyltransferase.